A 392-amino-acid chain; its full sequence is uncharacterized protein (392 aa).

The protein belongs to the chlamydial CPn_0675/CT_696/TC_0068 family.

This is an uncharacterized protein from Chlamydia muridarum (strain MoPn / Nigg).